A 481-amino-acid chain; its full sequence is MRVAIVGAGLAGLAAAIDLVDAGHQVAIYDSRPFVGGKVGSWIDADGNHIEMGLHVFFFNYANLFALMRKVGAFENLLPKAHTHTFINKGGEVGELDFRFPIGAPFNGLKAFFTTSQLTWLDKLQNALALGTSPLVRGILDYEGAMKIIRALDRISFADWFRSHGGSEGSLKRMWNPIAYALGFIDTENISARCMLTVFQMFAAKTEASKLNLLAGSPAEYLHKPILDYIQARGATLHLRRRVREIEYTETNGQTVVTGLQIADGDAVERVEADVYLAACDVPGIQRLLPEAWRKWSEFDNIYKLDAVPVATVQLRFDGWVTELGDREKRHQLDHATGLDNLLYTADADFSCFTDLALSSPKDYYRKGQGSLLQCVLTPGDPFIAMKNEDIAQHVLKQVHELFPSSRDLNMTWSNVVKLAQSLYREAPGMDPFRPDQKTPIANFFLAGSYTQQDYIDSMEGATISGRRAAKAMLEAQAIAA.

Belongs to the zeta carotene desaturase family. The cofactor is decylplastoquinone. It depends on 6-decylubiquinone as a cofactor.

The enzyme catalyses 9,9'-di-cis-zeta-carotene + 2 a quinone = 7,7',9,9'-tetra-cis-lycopene + 2 a quinol. Its pathway is carotenoid biosynthesis; lycopene biosynthesis. Its function is as follows. Catalyzes the conversion of zeta-carotene to lycopene via the intermediary of neurosporene. It carries out two consecutive desaturations (introduction of double bonds) at positions C-7 and C-7'. The sequence is that of Probable zeta-carotene desaturase (zds) from Synechococcus elongatus (strain ATCC 33912 / PCC 7942 / FACHB-805) (Anacystis nidulans R2).